A 117-amino-acid polypeptide reads, in one-letter code: Hydrogenase maturation factor HypA (117 aa).

Histidine 2 is a binding site for Ni(2+). Residues cysteine 73, cysteine 76, cysteine 89, and cysteine 92 each contribute to the Zn(2+) site.

This sequence belongs to the HypA/HybF family.

Its function is as follows. Involved in the maturation of [NiFe] hydrogenases. Required for nickel insertion into the metal center of the hydrogenase. In Shewanella baltica (strain OS223), this protein is Hydrogenase maturation factor HypA.